The following is a 106-amino-acid chain: ATP-dependent Clp protease adapter protein ClpS (106 aa).

The protein belongs to the ClpS family. In terms of assembly, binds to the N-terminal domain of the chaperone ClpA.

In terms of biological role, involved in the modulation of the specificity of the ClpAP-mediated ATP-dependent protein degradation. The chain is ATP-dependent Clp protease adapter protein ClpS from Citrobacter koseri (strain ATCC BAA-895 / CDC 4225-83 / SGSC4696).